The primary structure comprises 167 residues: MPTRSLPTFLTLLLLASIDWVSKLVVLLKSCQLSPHSSAFLYSYVWGHFSFLIIPSFNEGAAFGLFAQYKIPLLIFRVCVILGLALFLRIKYKSLHRRTRIALTLILAGALGNVGDILLHGKVVDFLFLSYYSWRFPSFNLADAFISIGTLLLIGHLYFTKESKKCF.

A run of 4 helical transmembrane segments spans residues 8–28 (TFLTLLLLASIDWVSKLVVLL), 46–66 (WGHFSFLIIPSFNEGAAFGLF), 68–88 (QYKIPLLIFRVCVILGLALFL), and 101–121 (IALTLILAGALGNVGDILLHG). Catalysis depends on residues D125 and D143. Residues 139–159 (FNLADAFISIGTLLLIGHLYF) traverse the membrane as a helical segment.

The protein belongs to the peptidase A8 family.

The protein resides in the cell inner membrane. It carries out the reaction Release of signal peptides from bacterial membrane prolipoproteins. Hydrolyzes -Xaa-Yaa-Zaa-|-(S,diacylglyceryl)Cys-, in which Xaa is hydrophobic (preferably Leu), and Yaa (Ala or Ser) and Zaa (Gly or Ala) have small, neutral side chains.. It functions in the pathway protein modification; lipoprotein biosynthesis (signal peptide cleavage). In terms of biological role, this protein specifically catalyzes the removal of signal peptides from prolipoproteins. The protein is Lipoprotein signal peptidase of Chlamydia trachomatis serovar L2 (strain ATCC VR-902B / DSM 19102 / 434/Bu).